Here is a 345-residue protein sequence, read N- to C-terminus: N-acetyl-gamma-glutamyl-phosphate reductase (345 aa).

Residue Cys149 is part of the active site.

It belongs to the NAGSA dehydrogenase family. Type 1 subfamily.

The protein resides in the cytoplasm. It carries out the reaction N-acetyl-L-glutamate 5-semialdehyde + phosphate + NADP(+) = N-acetyl-L-glutamyl 5-phosphate + NADPH + H(+). It functions in the pathway amino-acid biosynthesis; L-arginine biosynthesis; N(2)-acetyl-L-ornithine from L-glutamate: step 3/4. Its function is as follows. Catalyzes the NADPH-dependent reduction of N-acetyl-5-glutamyl phosphate to yield N-acetyl-L-glutamate 5-semialdehyde. This Marinobacter nauticus (strain ATCC 700491 / DSM 11845 / VT8) (Marinobacter aquaeolei) protein is N-acetyl-gamma-glutamyl-phosphate reductase.